A 201-amino-acid chain; its full sequence is Homeobox protein goosecoid-2 (201 aa).

3 disordered regions span residues 1–55 (MATA…PEAP), 95–124 (PATP…RRTR), and 179–201 (RHQK…KESC). Over residues 95-106 (PATPSPLTAPRA) the composition is skewed to low complexity. A DNA-binding region (homeobox) is located at residues 123–182 (TRRHRTIFSEEQLQALEALFVQNQYPDVGTRERLAVRIRLREERVEVWFKNRRAKWRHQK).

It belongs to the paired homeobox family. Bicoid subfamily. As to expression, expressed in adult testis.

Its subcellular location is the nucleus. Functionally, may have a role in development. May regulate its own transcription. May bind the bicoid consensus sequence TAATCC. The protein is Homeobox protein goosecoid-2 (Gsc2) of Mus musculus (Mouse).